The primary structure comprises 80 residues: Serine protease inhibitor Kazal-type 6 (80 aa).

The first 23 residues, 1 to 23 (MKLSGMFLLLSLALFCFLTGVFS), serve as a signal peptide directing secretion. Gln-24 is subject to Pyrrolidone carboxylic acid. A Kazal-like domain is found at 24–80 (QGGQVDCGEFQDPKVYCTRESNPHCGSDGQTYGNKCAFCKAIVKSGGKISLKHPGKC). 3 cysteine pairs are disulfide-bonded: Cys-30/Cys-62, Cys-40/Cys-59, and Cys-48/Cys-80.

The protein localises to the secreted. Its function is as follows. Serine protease inhibitor selective for kallikreins. Efficiently inhibits KLK4, KLK5, KLK6, KLK7, KLK12, KLK13 and KLK14. Doesn't inhibit KLK8. This chain is Serine protease inhibitor Kazal-type 6 (SPINK6), found in Homo sapiens (Human).